The following is a 292-amino-acid chain: 4-hydroxy-tetrahydrodipicolinate synthase (292 aa).

Thr-45 contributes to the pyruvate binding site. Catalysis depends on Tyr-133, which acts as the Proton donor/acceptor. Residue Lys-161 is the Schiff-base intermediate with substrate of the active site. Ile-203 lines the pyruvate pocket.

This sequence belongs to the DapA family. In terms of assembly, homotetramer; dimer of dimers.

The protein localises to the cytoplasm. The enzyme catalyses L-aspartate 4-semialdehyde + pyruvate = (2S,4S)-4-hydroxy-2,3,4,5-tetrahydrodipicolinate + H2O + H(+). It functions in the pathway amino-acid biosynthesis; L-lysine biosynthesis via DAP pathway; (S)-tetrahydrodipicolinate from L-aspartate: step 3/4. In terms of biological role, catalyzes the condensation of (S)-aspartate-beta-semialdehyde [(S)-ASA] and pyruvate to 4-hydroxy-tetrahydrodipicolinate (HTPA). The sequence is that of 4-hydroxy-tetrahydrodipicolinate synthase from Erwinia tasmaniensis (strain DSM 17950 / CFBP 7177 / CIP 109463 / NCPPB 4357 / Et1/99).